Here is a 400-residue protein sequence, read N- to C-terminus: Large envelope protein (400 aa).

At Met-1 the chain carries N-acetylmethionine. Residues 1–20 are disordered; the sequence is MGGWSAKPRKGMGTNLSVPN. The N-myristoyl glycine; by host moiety is linked to residue Gly-2. The segment at 2 to 119 is pre-S1; it reads GGWSAKPRKG…PPLRDSHPQA (118 aa). The interval 2–174 is pre-S; that stretch reads GGWSAKPRKG…SSRTGDPALN (173 aa). Over 2–181 the chain is Virion surface; in external conformation; it reads GGWSAKPRKG…ALNMENITSG (180 aa). The Intravirion; in internal conformation segment spans residues 2–253; that stretch reads GGWSAKPRKG…PGYRWMCLRR (252 aa). Trp-4 carries N-linked (GlcNAc...) asparagine glycosylation. The pre-S2 stretch occupies residues 120-174; sequence MQWNSTAFQQALQDPRVRGLFFPAGGSSSGTVNPAPNIASHISSISSRTGDPALN. A helical transmembrane segment spans residues 182–202; the sequence is FLGPLLVLQAGFFLLTRILTI. Over 203–253 the chain is Intravirion; in external conformation; it reads PQSLDSWWTSLNFLGGSPVCLGQNSQSPTSNHSPTSCPPICPGYRWMCLRR. A helical transmembrane segment spans residues 254–274; the sequence is FIIFLFILLLCLIFLLVLLDY. Over 275 to 348 the chain is Virion surface; that stretch reads QGMLPVCPLI…WASVRFSWLS (74 aa). The N-linked (GlcNAc...) asparagine; by host glycan is linked to Asn-320. A helical membrane pass occupies residues 349–369; sequence LLVPFVQWFVGLSPTVWLSVI. Residues 370–375 are Intravirion-facing; that stretch reads WMMWYW. The chain crosses the membrane as a helical span at residues 376–398; sequence GPSLYNILSPFIPLLPIFFCLWV. Topologically, residues 399-400 are virion surface; sequence YI.

This sequence belongs to the orthohepadnavirus major surface antigen family. In its internal form (Li-HBsAg), interacts with the capsid protein and with the isoform S. Interacts with host chaperone CANX. As to quaternary structure, associates with host chaperone CANX through its pre-S2 N glycan; this association may be essential for isoform M proper secretion. In terms of assembly, interacts with isoform L. Interacts with the antigens of satellite virus HDV (HDVAgs); this interaction is required for encapsidation of HDV genomic RNA. Post-translationally, isoform M is N-terminally acetylated by host at a ratio of 90%, and N-glycosylated by host at the pre-S2 region. Myristoylated.

It localises to the virion membrane. In terms of biological role, the large envelope protein exists in two topological conformations, one which is termed 'external' or Le-HBsAg and the other 'internal' or Li-HBsAg. In its external conformation the protein attaches the virus to cell receptors and thereby initiating infection. This interaction determines the species specificity and liver tropism. This attachment induces virion internalization predominantly through caveolin-mediated endocytosis. The large envelope protein also assures fusion between virion membrane and endosomal membrane. In its internal conformation the protein plays a role in virion morphogenesis and mediates the contact with the nucleocapsid like a matrix protein. Its function is as follows. The middle envelope protein plays an important role in the budding of the virion. It is involved in the induction of budding in a nucleocapsid independent way. In this process the majority of envelope proteins bud to form subviral lipoprotein particles of 22 nm of diameter that do not contain a nucleocapsid. The chain is Large envelope protein from Hepatitis B virus genotype A1 subtype adw2 (isolate Southern-Africa/Cai) (HBV-A).